The sequence spans 606 residues: Phosphomethylpyrimidine synthase (606 aa).

Positions 84–103 are disordered; sequence EPYPARSVKPEDNGLTSSPI. Substrate is bound by residues asparagine 209, methionine 238, tyrosine 267, histidine 303, 323–325, 364–367, and glutamate 403; these read SRG and DGLR. Histidine 407 lines the Zn(2+) pocket. Position 430 (tyrosine 430) interacts with substrate. Histidine 471 lines the Zn(2+) pocket. Positions 551, 554, and 559 each coordinate [4Fe-4S] cluster.

This sequence belongs to the ThiC family. In terms of assembly, homodimer. [4Fe-4S] cluster serves as cofactor.

It carries out the reaction 5-amino-1-(5-phospho-beta-D-ribosyl)imidazole + S-adenosyl-L-methionine = 4-amino-2-methyl-5-(phosphooxymethyl)pyrimidine + CO + 5'-deoxyadenosine + formate + L-methionine + 3 H(+). It participates in cofactor biosynthesis; thiamine diphosphate biosynthesis. Functionally, catalyzes the synthesis of the hydroxymethylpyrimidine phosphate (HMP-P) moiety of thiamine from aminoimidazole ribotide (AIR) in a radical S-adenosyl-L-methionine (SAM)-dependent reaction. This is Phosphomethylpyrimidine synthase from Bartonella tribocorum (strain CIP 105476 / IBS 506).